The chain runs to 284 residues: MDAIKKKMQAMKIEKDNALDRADAAEEKVRQMTDKLERIEEELRDTQKKMMQTENDLDKAQEDLSTANSNLEEKEKKVQEAEAEVAALNRRMTLLEEELERAEERLKLATAKLEEATHTADESERVRKVMENRSFQDEERANTVESQLKEAQMLAEEADRKYDEVARKLTMVEADLERAEERAETGENKIVELEEELRVVGNNLKSLEVSEEKALQREDSYEEQIRTVSARLKEAETRAEFAERSVQKLQKEVDRLEDELVHEKERYKSISEELDQTFQELSGY.

Residues 1 to 284 (MDAIKKKMQA…DQTFQELSGY (284 aa)) are a coiled coil. The span at 110–142 (TAKLEEATHTADESERVRKVMENRSFQDEERAN) shows a compositional bias: basic and acidic residues. A disordered region spans residues 110–143 (TAKLEEATHTADESERVRKVMENRSFQDEERANT).

The protein belongs to the tropomyosin family.

Its function is as follows. Tropomyosin, in association with the troponin complex, plays a central role in the calcium dependent regulation of muscle contraction. The chain is Tropomyosin from Anisakis simplex (Herring worm).